Consider the following 284-residue polypeptide: D-tagatose-1,6-bisphosphate aldolase subunit GatY (284 aa).

The active-site Proton donor is the D82. The Zn(2+) site is built by H83 and H180. A dihydroxyacetone phosphate-binding site is contributed by G181. H208 provides a ligand contact to Zn(2+). Dihydroxyacetone phosphate-binding positions include 209 to 211 and 230 to 233; these read GAS and NVAT.

It belongs to the class II fructose-bisphosphate aldolase family. TagBP aldolase GatY subfamily. As to quaternary structure, forms a complex with GatZ. The cofactor is Zn(2+).

It carries out the reaction D-tagatofuranose 1,6-bisphosphate = D-glyceraldehyde 3-phosphate + dihydroxyacetone phosphate. It functions in the pathway carbohydrate metabolism; D-tagatose 6-phosphate degradation; D-glyceraldehyde 3-phosphate and glycerone phosphate from D-tagatose 6-phosphate: step 2/2. Catalytic subunit of the tagatose-1,6-bisphosphate aldolase GatYZ, which catalyzes the reversible aldol condensation of dihydroxyacetone phosphate (DHAP or glycerone-phosphate) with glyceraldehyde 3-phosphate (G3P) to produce tagatose 1,6-bisphosphate (TBP). Requires GatZ subunit for full activity and stability. Is involved in the catabolism of galactitol. The polypeptide is D-tagatose-1,6-bisphosphate aldolase subunit GatY (Salmonella choleraesuis (strain SC-B67)).